We begin with the raw amino-acid sequence, 422 residues long: UPF0597 protein Kole_0595 (422 aa).

Belongs to the UPF0597 family.

In Kosmotoga olearia (strain ATCC BAA-1733 / DSM 21960 / TBF 19.5.1), this protein is UPF0597 protein Kole_0595.